Consider the following 372-residue polypeptide: Pristinol synthase (372 aa).

The span at 1–12 (MAHETTSGRRLP) shows a compositional bias: basic and acidic residues. A disordered region spans residues 1–23 (MAHETTSGRRLPDPTSPSDPTRR). Mg(2+) is bound by residues D100 and D104. Positions 100-104 (DDQFD) match the DDXXD motif motif. A substrate-binding site is contributed by R197. Mg(2+) is bound by residues N243 and S247. K250 contacts substrate. Residue E251 participates in Mg(2+) binding. 337-338 (RY) provides a ligand contact to substrate. The disordered stretch occupies residues 349–372 (GRRRPWDGLTTATGTASPRHPRRA).

Belongs to the terpene synthase family. Requires Mg(2+) as cofactor.

The catalysed reaction is (2E,6E)-farnesyl diphosphate + H2O = (+)-(2S,3R,9R)-pristinol + diphosphate. It functions in the pathway secondary metabolite biosynthesis; terpenoid biosynthesis. In terms of biological role, catalyzes the conversion of (2E,6E)-farnesyl diphosphate (FPP) to yield a new 5-8 bicyclic (pristinane) sesquiterpenol (+)-(2S,3R,9R)-pristinol via a 1,11-cyclization, which requires the abstraction of the pyrophosphate from FPP to yield the humulyl cation. The only accepted substrate is farnesyl diphosphate (FPP). The chain is Pristinol synthase from Streptomyces pristinaespiralis (strain ATCC 25486 / DSM 40338 / CBS 914.69 / JCM 4507 / KCC S-0507 / NBRC 13074 / NRRL 2958 / 5647).